Consider the following 336-residue polypeptide: Electron transfer flavoprotein subunit alpha (336 aa).

275–303 is an FAD binding site; sequence LYIACGISGAIQHLAGMQDSDYIIAINKD.

This sequence belongs to the ETF alpha-subunit/FixB family. As to quaternary structure, heterodimer of an alpha and a beta subunit. Requires FAD as cofactor.

In terms of biological role, the electron transfer flavoprotein serves as a specific electron acceptor for other dehydrogenases. It transfers the electrons to the main respiratory chain via ETF-ubiquinone oxidoreductase (ETF dehydrogenase). The polypeptide is Electron transfer flavoprotein subunit alpha (etfA) (Clostridium acetobutylicum (strain ATCC 824 / DSM 792 / JCM 1419 / IAM 19013 / LMG 5710 / NBRC 13948 / NRRL B-527 / VKM B-1787 / 2291 / W)).